The chain runs to 205 residues: 2-dehydro-3-deoxy-6-phosphogalactonate aldolase (205 aa).

Arginine 14 is a 2-dehydro-3-deoxy-6-phospho-D-galactonate binding site. Glutamate 37 acts as the Proton donor/acceptor in catalysis. Residues threonine 66, lysine 126, glycine 156, glycine 176, and serine 177 each contribute to the 2-dehydro-3-deoxy-6-phospho-D-galactonate site. Lysine 126 serves as the catalytic Schiff-base intermediate with substrate.

It belongs to the KHG/KDPG aldolase family. As to quaternary structure, homotrimer.

It carries out the reaction 2-dehydro-3-deoxy-6-phospho-D-galactonate = D-glyceraldehyde 3-phosphate + pyruvate. It functions in the pathway carbohydrate acid metabolism; D-galactonate degradation; D-glyceraldehyde 3-phosphate and pyruvate from D-galactonate: step 3/3. Functionally, involved in the degradation of galactose via the DeLey-Doudoroff pathway. Catalyzes the reversible, stereospecific retro-aldol cleavage of 2-keto-3-deoxy-6-phosphogalactonate (KDPGal) to pyruvate and D-glyceraldehyde-3-phosphate. In the synthetic direction, it catalyzes the addition of pyruvate to electrophilic aldehydes with re-facial selectivity. It can use a limited number of aldehyde substrates, including D-glyceraldehyde-3-phosphate (natural substrate), D-glyceraldehyde, glycolaldehyde, 2-pyridinecarboxaldehyde, D-ribose, D-erythrose and D-threose. It efficiently catalyzes aldol addition only using pyruvate as the nucleophilic component and accepts both stereochemical configurations at C2 of the electrophile. The polypeptide is 2-dehydro-3-deoxy-6-phosphogalactonate aldolase (dgoA) (Escherichia coli (strain K12)).